We begin with the raw amino-acid sequence, 264 residues long: Ribosomal protein L11 methyltransferase (264 aa).

Positions 116, 137, 159, and 200 each coordinate S-adenosyl-L-methionine.

The protein belongs to the methyltransferase superfamily. PrmA family.

Its subcellular location is the cytoplasm. The enzyme catalyses L-lysyl-[protein] + 3 S-adenosyl-L-methionine = N(6),N(6),N(6)-trimethyl-L-lysyl-[protein] + 3 S-adenosyl-L-homocysteine + 3 H(+). In terms of biological role, methylates ribosomal protein L11. This Thermotoga maritima (strain ATCC 43589 / DSM 3109 / JCM 10099 / NBRC 100826 / MSB8) protein is Ribosomal protein L11 methyltransferase.